The following is an 82-amino-acid chain: UPF0729 protein C18orf32 homolog (82 aa).

The tract at residues 1–37 (MVCIPCIVIPVLLWVYKKFLEPIVYPFISPIINRIWP) is necessary for its localzation to the endoplasmic reticulum and lipid droplets. The disordered stretch occupies residues 46 to 82 (TSAKKEESNGTCKASGTSITNGSVSRGEEAVPDKKTD). Residues 54-69 (NGTCKASGTSITNGSV) are compositionally biased toward polar residues. Over residues 71–82 (RGEEAVPDKKTD) the composition is skewed to basic and acidic residues.

It belongs to the UPF0729 family.

The protein localises to the endoplasmic reticulum. It localises to the lipid droplet. The sequence is that of UPF0729 protein C18orf32 homolog from Xenopus tropicalis (Western clawed frog).